The following is a 125-amino-acid chain: Small ribosomal subunit protein eS8 (125 aa).

The segment at 1–34 (MQWQGRSVRKSTGGRYSPSRGKRRREIGSAPAET) is disordered.

This sequence belongs to the eukaryotic ribosomal protein eS8 family. Part of the 30S ribosomal subunit.

The chain is Small ribosomal subunit protein eS8 from Methanospirillum hungatei JF-1 (strain ATCC 27890 / DSM 864 / NBRC 100397 / JF-1).